The following is a 525-amino-acid chain: Keratin, type I cytoskeletal 24 (525 aa).

The disordered stretch occupies residues Met-1–Gly-30. The segment at Met-1 to Gly-139 is head. The segment at Glu-140–Trp-175 is coil 1A. Residues Glu-140 to Ser-456 enclose the IF rod domain. A linker 1 region spans residues Tyr-176–Ile-198. The interval Ile-199 to Met-290 is coil 1B. Positions Gln-291–Leu-313 are linker 12. The interval Leu-314 to Glu-452 is coil 2. The tail stretch occupies residues Gly-453–Lys-525. The interval Ala-459–Arg-497 is disordered. The span at Asp-480–Arg-491 shows a compositional bias: polar residues.

Belongs to the intermediate filament family. As to quaternary structure, heterotetramer of two type I and two type II keratins. As to expression, highly expressed in keratinocytes, placenta, colon and spleen. Expressed at lower level in thymus and testis.

The polypeptide is Keratin, type I cytoskeletal 24 (KRT24) (Homo sapiens (Human)).